The following is a 74-amino-acid chain: MKQIFIGIIRFYQKCISPLTPPSCRFYPTCSNYGLEAIKTHGALKGGWLTIKRILKCHPLHPGGIDPVPPKKEK.

Belongs to the UPF0161 family.

Its subcellular location is the cell membrane. Its function is as follows. Could be involved in insertion of integral membrane proteins into the membrane. This is Putative membrane protein insertion efficiency factor from Bacillus pumilus (strain SAFR-032).